The following is a 308-amino-acid chain: Growth/differentiation factor 15 (308 aa).

The signal sequence occupies residues 1–29 (MPGQELRTVNGSQMLLVLLVLSWLPHGGA). Positions 30–194 (LSLAEASRAS…RPQAARGRRR (165 aa)) are excised as a propeptide. N70 is a glycosylation site (N-linked (GlcNAc...) asparagine). The disordered stretch occupies residues 152–177 (APALHLRLSPPPSQSDQLLAESSSAR). A compositionally biased stretch (polar residues) spans 165 to 177 (QSDQLLAESSSAR). 4 cysteine pairs are disulfide-bonded: C203-C210, C211-C274, C240-C305, and C244-C307.

The protein belongs to the TGF-beta family. As to quaternary structure, homodimer; disulfide-linked. Interacts with GFRAL and RET; ligand of GFRAL, which mediates GDF15 internalization and cellular signaling through interaction with RET via the formation of a 2:2:2 ternary complex composed of GDF15, GFRAL and RET. In terms of tissue distribution, detected in plasma (at protein level). Highly expressed in placenta, with lower levels in prostate and colon and some expression in kidney.

It is found in the secreted. In terms of biological role, hormone produced in response to various stresses to confer information about those stresses to the brain, and trigger an aversive response, characterized by nausea, vomiting, and/or loss of appetite. The aversive response is both required to reduce continuing exposure to those stresses at the time of exposure and to promote avoidance behavior in the future. Acts by binding to its receptor, GFRAL, activating GFRAL-expressing neurons localized in the area postrema and nucleus tractus solitarius of the brainstem. It then triggers the activation of neurons localized within the parabrachial nucleus and central amygdala, which constitutes part of the 'emergency circuit' that shapes responses to stressful conditions. The GDF15-GFRAL signal induces expression of genes involved in metabolism, such as lipid metabolism in adipose tissues. Required for avoidance behavior in response to food allergens: induced downstream of mast cell activation to promote aversion and minimize harmful effects of exposure to noxious substances. In addition to suppress appetite, also promotes weight loss by enhancing energy expenditure in muscle: acts by increasing calcium futile cycling in muscle. Contributes to the effect of metformin, an anti-diabetic drug, on appetite reduction and weight loss: produced in the kidney in response to metformin treatment, thereby activating the GDF15-GFRAL response, leading to reduced appetite and weight. The contribution of GDF15 to weight loss following metformin treatment is however limited and subject to discussion. Produced in response to anticancer drugs, such as camptothecin or cisplatin, promoting nausea, vomiting and contributing to malnutrition. Overproduced in many cancers, promoting anorexia in cancer (cachexia). Responsible for the risk of nausea and vomiting during pregnancy: high levels of GDF15 during pregnancy, mostly originating from the fetus, are associated with increased nausea and vomiting. Maternal sensitivity to nausea is probably determined by pre-pregnancy exposure to GDF15, women with naturally high level of GDF15 being less susceptible to nausea than women with low levels of GDF15 before pregnancy. Promotes metabolic adaptation in response to systemic inflammation caused by bacterial and viral infections in order to promote tissue tolerance and prevent tissue damage. Required for tissue tolerance in response to myocardial infarction by acting as an inhibitor of leukocyte integring activation, thereby protecting against cardiac rupture. Inhibits growth hormone signaling on hepatocytes. This chain is Growth/differentiation factor 15, found in Homo sapiens (Human).